The chain runs to 544 residues: Probable protein kinase UbiB (544 aa).

The 379-residue stretch at 123 to 501 (DFDIKPLASA…KRQQAKGQFL (379 aa)) folds into the Protein kinase domain. Residues 129–137 (LASASIAQV) and K152 contribute to the ATP site. D287 functions as the Proton acceptor in the catalytic mechanism. The helical transmembrane segment at 515–537 (LLTSNITVLASISAATGAAFWLF) threads the bilayer.

Belongs to the ABC1 family. UbiB subfamily.

It is found in the cell inner membrane. It participates in cofactor biosynthesis; ubiquinone biosynthesis [regulation]. Functionally, is probably a protein kinase regulator of UbiI activity which is involved in aerobic coenzyme Q (ubiquinone) biosynthesis. In Aliivibrio fischeri (strain ATCC 700601 / ES114) (Vibrio fischeri), this protein is Probable protein kinase UbiB.